A 142-amino-acid polypeptide reads, in one-letter code: Putative arsenate reductase (142 aa).

The protein belongs to the low molecular weight phosphotyrosine protein phosphatase family.

Reduces arsenate [As(V)] to arsenite [As(III)]. The polypeptide is Putative arsenate reductase (arsC) (Halobacterium salinarum (strain ATCC 700922 / JCM 11081 / NRC-1) (Halobacterium halobium)).